The primary structure comprises 295 residues: UDP-N-acetylenolpyruvoylglucosamine reductase (295 aa).

The region spanning 23–188 (KVGGPADFLA…ISAKFALKPG (166 aa)) is the FAD-binding PCMH-type domain. Arginine 167 is an active-site residue. Serine 217 (proton donor) is an active-site residue. Glutamate 287 is a catalytic residue.

It belongs to the MurB family. Requires FAD as cofactor.

It localises to the cytoplasm. The catalysed reaction is UDP-N-acetyl-alpha-D-muramate + NADP(+) = UDP-N-acetyl-3-O-(1-carboxyvinyl)-alpha-D-glucosamine + NADPH + H(+). It participates in cell wall biogenesis; peptidoglycan biosynthesis. In terms of biological role, cell wall formation. This is UDP-N-acetylenolpyruvoylglucosamine reductase from Streptococcus pyogenes serotype M49 (strain NZ131).